The primary structure comprises 51 residues: Gene 62 protein (51 aa).

This chain is Gene 62 protein (62), found in Mycobacterium (Mycobacteriophage L5).